Reading from the N-terminus, the 124-residue chain is Fluoride-specific ion channel FluC (124 aa).

The next 4 helical transmembrane spans lie at 1 to 21 (MIGVTLAVAVGGALGCLLRFA), 34 to 54 (FYAATLAVNIAGCLLIGYLYG), 62 to 82 (VPLALRAGLIAGFLGGLTTFS), and 101 to 121 (FSYLAFSVLGGLLATWAGLIL). Positions 76 and 79 each coordinate Na(+).

This sequence belongs to the fluoride channel Fluc/FEX (TC 1.A.43) family.

It is found in the cell inner membrane. It catalyses the reaction fluoride(in) = fluoride(out). Na(+) is not transported, but it plays an essential structural role and its presence is essential for fluoride channel function. In terms of biological role, fluoride-specific ion channel. Important for reducing fluoride concentration in the cell, thus reducing its toxicity. The polypeptide is Fluoride-specific ion channel FluC (Azotobacter vinelandii (strain DJ / ATCC BAA-1303)).